Reading from the N-terminus, the 91-residue chain is DNA-binding protein HU (91 aa).

It belongs to the bacterial histone-like protein family.

Its function is as follows. Histone-like DNA-binding protein which is capable of wrapping DNA to stabilize it, and thus to prevent its denaturation under extreme environmental conditions. Also seems to act as a fortuitous virulence factor in delayed sequelae by binding to heparan sulfate-proteoglycans in the extracellular matrix of target organs and acting as a nidus for in situ immune complex formation. In Streptococcus downei (Streptococcus sobrinus), this protein is DNA-binding protein HU (hup).